A 750-amino-acid chain; its full sequence is Photosystem I P700 chlorophyll a apoprotein A1 (750 aa).

The next 8 helical transmembrane spans lie at Val70–Ala93, Leu156–His179, Leu195–Leu219, Ile291–Tyr309, Trp346–Tyr369, Leu385–Val411, Ala433–His455, and Phe531–Leu549. Cys573 and Cys582 together coordinate [4Fe-4S] cluster. The next 2 helical transmembrane spans lie at His589 to Trp610 and Leu664 to Phe686. Residue His675 coordinates chlorophyll a'. Positions 683 and 691 each coordinate chlorophyll a. Trp692 contacts phylloquinone. Residues Ala724–Ala744 traverse the membrane as a helical segment.

Belongs to the PsaA/PsaB family. As to quaternary structure, the PsaA/B heterodimer binds the P700 chlorophyll special pair and subsequent electron acceptors. PSI consists of a core antenna complex that captures photons, and an electron transfer chain that converts photonic excitation into a charge separation. The eukaryotic PSI reaction center is composed of at least 11 subunits. Requires P700 is a chlorophyll a/chlorophyll a' dimer, A0 is one or more chlorophyll a, A1 is one or both phylloquinones and FX is a shared 4Fe-4S iron-sulfur center. as cofactor.

It localises to the plastid. The protein localises to the chloroplast thylakoid membrane. It carries out the reaction reduced [plastocyanin] + hnu + oxidized [2Fe-2S]-[ferredoxin] = oxidized [plastocyanin] + reduced [2Fe-2S]-[ferredoxin]. Its function is as follows. PsaA and PsaB bind P700, the primary electron donor of photosystem I (PSI), as well as the electron acceptors A0, A1 and FX. PSI is a plastocyanin-ferredoxin oxidoreductase, converting photonic excitation into a charge separation, which transfers an electron from the donor P700 chlorophyll pair to the spectroscopically characterized acceptors A0, A1, FX, FA and FB in turn. Oxidized P700 is reduced on the lumenal side of the thylakoid membrane by plastocyanin. The chain is Photosystem I P700 chlorophyll a apoprotein A1 from Nasturtium officinale (Watercress).